Here is a 990-residue protein sequence, read N- to C-terminus: Bacteriophage adsorption protein A (990 aa).

Residues 1 to 27 (MKENNLNRVIGWSGLLLTSLLSTSALA) form the signal peptide. 3 TPR repeats span residues 81–114 (IPLT…HPGD), 612–645 (ANAY…EPNN), and 646–679 (SNTQ…LPDD).

As to quaternary structure, (Microbial infection) Interacts with N4 phage non-contractile sheath protein; this interaction is essential for viral adsorption to the host.

It is found in the cell outer membrane. Its function is as follows. (Microbial infection) Allows N4 phage attachment by binding to the viral non-contractile sheath protein. This chain is Bacteriophage adsorption protein A (nfrA), found in Escherichia coli (strain K12).